Reading from the N-terminus, the 555-residue chain is CTP synthase (555 aa).

An amidoligase domain region spans residues 1-270 (MTKFVFVTGG…DGLICDKLRL (270 aa)). Ser13 contributes to the CTP binding site. Ser13 provides a ligand contact to UTP. Residues 14–19 (SLGKGI) and Asp71 contribute to the ATP site. Residues Asp71 and Glu144 each contribute to the Mg(2+) site. CTP-binding positions include 151 to 153 (DIE), 191 to 196 (KTKPTQ), and Lys227. UTP-binding positions include 191 to 196 (KTKPTQ) and Lys227. Residues 295–547 (NIVMVGKYVE…IKAALDHQAA (253 aa)) enclose the Glutamine amidotransferase type-1 domain. Gly356 provides a ligand contact to L-glutamine. Catalysis depends on Cys383, which acts as the Nucleophile; for glutamine hydrolysis. Residues 384-387 (LGMQ), Glu407, and Arg473 contribute to the L-glutamine site. Residues His520 and Glu522 contribute to the active site.

The protein belongs to the CTP synthase family. Homotetramer.

It carries out the reaction UTP + L-glutamine + ATP + H2O = CTP + L-glutamate + ADP + phosphate + 2 H(+). It catalyses the reaction L-glutamine + H2O = L-glutamate + NH4(+). The catalysed reaction is UTP + NH4(+) + ATP = CTP + ADP + phosphate + 2 H(+). It functions in the pathway pyrimidine metabolism; CTP biosynthesis via de novo pathway; CTP from UDP: step 2/2. Its activity is regulated as follows. Allosterically activated by GTP, when glutamine is the substrate; GTP has no effect on the reaction when ammonia is the substrate. The allosteric effector GTP functions by stabilizing the protein conformation that binds the tetrahedral intermediate(s) formed during glutamine hydrolysis. Inhibited by the product CTP, via allosteric rather than competitive inhibition. In terms of biological role, catalyzes the ATP-dependent amination of UTP to CTP with either L-glutamine or ammonia as the source of nitrogen. Regulates intracellular CTP levels through interactions with the four ribonucleotide triphosphates. This is CTP synthase from Albidiferax ferrireducens (strain ATCC BAA-621 / DSM 15236 / T118) (Rhodoferax ferrireducens).